We begin with the raw amino-acid sequence, 321 residues long: Glycerol-3-phosphate dehydrogenase [NAD(P)+] (321 aa).

NADPH contacts are provided by Trp-15, Arg-35, and Lys-101. Residues Lys-101 and Gly-129 each coordinate sn-glycerol 3-phosphate. Ala-133 is an NADPH binding site. Residues Lys-184, Asp-237, Ser-247, Arg-248, and Asn-249 each coordinate sn-glycerol 3-phosphate. Lys-184 acts as the Proton acceptor in catalysis. Arg-248 provides a ligand contact to NADPH. Positions 268 and 270 each coordinate NADPH.

The protein belongs to the NAD-dependent glycerol-3-phosphate dehydrogenase family.

Its subcellular location is the cytoplasm. The enzyme catalyses sn-glycerol 3-phosphate + NAD(+) = dihydroxyacetone phosphate + NADH + H(+). It catalyses the reaction sn-glycerol 3-phosphate + NADP(+) = dihydroxyacetone phosphate + NADPH + H(+). It participates in membrane lipid metabolism; glycerophospholipid metabolism. In terms of biological role, catalyzes the reduction of the glycolytic intermediate dihydroxyacetone phosphate (DHAP) to sn-glycerol 3-phosphate (G3P), the key precursor for phospholipid synthesis. The polypeptide is Glycerol-3-phosphate dehydrogenase [NAD(P)+] (Acidiphilium cryptum (strain JF-5)).